A 267-amino-acid polypeptide reads, in one-letter code: Large ribosomal subunit protein bL9m (267 aa).

The transit peptide at 1-52 (MAALVVTEPGRALLRAGTERLLRGGIQELLRPRHEGNSPGLARDFSLSQNRG) directs the protein to the mitochondrion.

Belongs to the bacterial ribosomal protein bL9 family. As to quaternary structure, component of the mitochondrial ribosome large subunit (39S) which comprises a 16S rRNA and about 50 distinct proteins.

Its subcellular location is the mitochondrion. This Papio anubis (Olive baboon) protein is Large ribosomal subunit protein bL9m (MRPL9).